The chain runs to 390 residues: Fer-related kinase 1 (390 aa).

Residues 23–119 enclose the SH2 domain; the sequence is YYHGMVPRQD…ASGAKIRRPM (97 aa). A Protein kinase domain is found at 131–386; it reads IVANKKLGEG…SIHKKLREFY (256 aa). ATP is bound by residues 137-145 and K161; that span reads LGEGAFGDV. D252 functions as the Proton acceptor in the catalytic mechanism.

The protein belongs to the protein kinase superfamily. Tyr protein kinase family. Fes/fps subfamily. As to quaternary structure, interacts with hmp-2. Requires Mn(2+) as cofactor.

The protein resides in the nucleus. It localises to the cytoplasm. The protein localises to the cell junction. It is found in the cell membrane. The catalysed reaction is L-tyrosyl-[protein] + ATP = O-phospho-L-tyrosyl-[protein] + ADP + H(+). Functionally, non-receptor tyrosine-protein kinase which plays a role in morphogenesis by regulating the epidermal enclosure of the embryo, independently of its kinase activity. Prevents hyperactivation of the Wnt signaling pathway during endoderm development, probably by preventing hmp-2 nuclear translocation. The protein is Fer-related kinase 1 of Caenorhabditis elegans.